A 495-amino-acid chain; its full sequence is Formin-like protein 17 (495 aa).

The tract at residues 1–92 (MDIRELIDIT…HNLKGQGQTR (92 aa)) is disordered. Residues 19–29 (GPPPPPPPPLL) show a composition bias toward pro residues. Residues 30–39 (QPHHSALSSS) are compositionally biased toward low complexity. In terms of domain architecture, FH2 spans 86–486 (KGQGQTRKAN…RAQKEAENEK (401 aa)).

It belongs to the formin-like family. Class-II subfamily.

This Arabidopsis thaliana (Mouse-ear cress) protein is Formin-like protein 17 (FH17).